Here is a 195-residue protein sequence, read N- to C-terminus: Endoribonuclease YbeY (195 aa).

The Zn(2+) site is built by His152, His156, and His162.

Belongs to the endoribonuclease YbeY family. Zn(2+) is required as a cofactor.

Its subcellular location is the cytoplasm. Functionally, single strand-specific metallo-endoribonuclease involved in late-stage 70S ribosome quality control and in maturation of the 3' terminus of the 16S rRNA. The sequence is that of Endoribonuclease YbeY from Rhodopseudomonas palustris (strain BisB5).